Here is a 144-residue protein sequence, read N- to C-terminus: D-aminoacyl-tRNA deacylase (144 aa).

Positions 137-138 (GP) match the Gly-cisPro motif, important for rejection of L-amino acids motif.

It belongs to the DTD family. Homodimer.

It is found in the cytoplasm. It carries out the reaction glycyl-tRNA(Ala) + H2O = tRNA(Ala) + glycine + H(+). The catalysed reaction is a D-aminoacyl-tRNA + H2O = a tRNA + a D-alpha-amino acid + H(+). Its function is as follows. An aminoacyl-tRNA editing enzyme that deacylates mischarged D-aminoacyl-tRNAs. Also deacylates mischarged glycyl-tRNA(Ala), protecting cells against glycine mischarging by AlaRS. Acts via tRNA-based rather than protein-based catalysis; rejects L-amino acids rather than detecting D-amino acids in the active site. By recycling D-aminoacyl-tRNA to D-amino acids and free tRNA molecules, this enzyme counteracts the toxicity associated with the formation of D-aminoacyl-tRNA entities in vivo and helps enforce protein L-homochirality. This Marinomonas sp. (strain MWYL1) protein is D-aminoacyl-tRNA deacylase.